A 706-amino-acid chain; its full sequence is D-(-)-3-hydroxybutyrate oligomer hydrolase (706 aa).

A signal peptide spans 1–32; the sequence is MTTTSKNCLTLTSIAAAVAAVLVLSACGGGSA. The Charge relay system role is filled by serine 311.

Belongs to the D-(-)-3-hydroxybutyrate oligomer hydrolase family.

The protein localises to the secreted. The enzyme catalyses (3R)-hydroxybutanoate dimer + H2O = 2 (R)-3-hydroxybutanoate + H(+). It functions in the pathway lipid metabolism; butanoate metabolism. Its function is as follows. Participates in the degradation of poly-3-hydroxybutyrate (PHB). It works downstream of poly(3-hydroxybutyrate) depolymerase, hydrolyzing D(-)-3-hydroxybutyrate oligomers of various length (3HB-oligomers) into 3HB-monomers. This chain is D-(-)-3-hydroxybutyrate oligomer hydrolase, found in Polaromonas sp. (strain JS666 / ATCC BAA-500).